Here is a 682-residue protein sequence, read N- to C-terminus: Potassium-transporting ATPase ATP-binding subunit (682 aa).

The next 4 membrane-spanning stretches (helical) occupy residues 34–54 (PVMFIVWIGSVVTTALAVAMA), 62–82 (AGFTGTISVWLWFTVLFANVA), 219–239 (IALTILLVALTIVFLLATATL), and 254–274 (VLVALLVCLIPTTIGGLLSAI). Catalysis depends on Asp-307, which acts as the 4-aspartylphosphate intermediate. ATP contacts are provided by residues Asp-344, Glu-348, 377 to 384 (FTAQTRMS), and Lys-395. Asp-518 and Asp-522 together coordinate Mg(2+). 3 consecutive transmembrane segments (helical) span residues 588 to 608 (FAIIPAAFAATYPQLNALNVM), 616 to 636 (AILSAVIFNALIIVFLIPLAL), and 662 to 682 (LVVPFIGIKIIDMLLTVFGLV).

It belongs to the cation transport ATPase (P-type) (TC 3.A.3) family. Type IA subfamily. The system is composed of three essential subunits: KdpA, KdpB and KdpC.

It is found in the cell inner membrane. It catalyses the reaction K(+)(out) + ATP + H2O = K(+)(in) + ADP + phosphate + H(+). Part of the high-affinity ATP-driven potassium transport (or Kdp) system, which catalyzes the hydrolysis of ATP coupled with the electrogenic transport of potassium into the cytoplasm. This subunit is responsible for energy coupling to the transport system and for the release of the potassium ions to the cytoplasm. The polypeptide is Potassium-transporting ATPase ATP-binding subunit (Enterobacter sp. (strain 638)).